Reading from the N-terminus, the 1196-residue chain is Nucleolar protein 6 (1196 aa).

Disordered regions lie at residues 1–74 (MPGK…NVKP) and 1140–1196 (KREQ…KALK). 2 stretches are compositionally biased toward basic and acidic residues: residues 22–31 (HAEDHSDLEH) and 65–74 (HRGDTKNVKP). Residues 1165 to 1187 (KPKKHGKRKGTGKAAPPKKKRLI) show a composition bias toward basic residues.

It belongs to the NRAP family. In terms of assembly, part of the small subunit (SSU) processome, composed of more than 70 proteins and the RNA chaperone small nucleolar RNA (snoRNA) U3.

The protein resides in the nucleus. It localises to the nucleolus. It is found in the chromosome. Functionally, part of the small subunit (SSU) processome, first precursor of the small eukaryotic ribosomal subunit. During the assembly of the SSU processome in the nucleolus, many ribosome biogenesis factors, an RNA chaperone and ribosomal proteins associate with the nascent pre-rRNA and work in concert to generate RNA folding, modifications, rearrangements and cleavage as well as targeted degradation of pre-ribosomal RNA by the RNA exosome. The chain is Nucleolar protein 6 from Drosophila simulans (Fruit fly).